The primary structure comprises 443 residues: Tol-Pal system protein TolB (443 aa).

The first 31 residues, 1–31 (MMIMTTRTFFSWFIVICAFWLTSFSSVPVHA), serve as a signal peptide directing secretion. The interval 422–443 (ERQLPTPNDASDPAWSPLLNIQ) is disordered.

This sequence belongs to the TolB family. In terms of assembly, the Tol-Pal system is composed of five core proteins: the inner membrane proteins TolA, TolQ and TolR, the periplasmic protein TolB and the outer membrane protein Pal. They form a network linking the inner and outer membranes and the peptidoglycan layer.

It localises to the periplasm. Its function is as follows. Part of the Tol-Pal system, which plays a role in outer membrane invagination during cell division and is important for maintaining outer membrane integrity. This Bartonella henselae (strain ATCC 49882 / DSM 28221 / CCUG 30454 / Houston 1) (Rochalimaea henselae) protein is Tol-Pal system protein TolB.